Reading from the N-terminus, the 200-residue chain is Eukaryotic translation initiation factor isoform 4E (200 aa).

Residues 1–22 (MATEAPIEATEVPPASATETVA) are disordered. Residues 44–49 (QGAAWG), Lys-76, and 94–95 (WE) each bind mRNA. Cys-99 and Cys-138 are joined by a disulfide. MRNA contacts are provided by residues 145–150 (RRSQDK) and 189–192 (KRER).

Belongs to the eukaryotic initiation factor 4E family. In terms of assembly, EIF4F is a multi-subunit complex, the composition of which varies with external and internal environmental conditions. It is composed of at least EIF4A, EIF4E and EIF4G. EIF4E is also known to interact with other partners. In higher plants two isoforms of EIF4F have been identified, named isoform EIF4F and isoform EIF(iso)4F. Isoform EIF4F has subunits p220 and p26, whereas isoform EIF(iso)4F has subunits p82 and p28. (Microbial infection) Interacts with viral genome-linked protein (VPg); this interaction is possible in susceptible hosts but impaired in resistant plants. In terms of processing, according to the redox status, the Cys-99-Cys-138 disulfide bridge may have a role in regulating protein function by affecting its ability to bind capped mRNA. Expressed ubiquitously in seedlings, roots, leaves, sepals, petals, anthers and dehisced pollen, with highest levels in pollen, maturing anthers and roots. Strongly expressed in susceptible plants but not in resistant ones.

It is found in the cytoplasm. It localises to the nucleus. Its function is as follows. Component of the protein complex eIF4F, which is involved in the recognition of the mRNA cap, ATP-dependent unwinding of 5'-terminal secondary structure and recruitment of mRNA to the ribosome. Recognizes and binds the 7-methylguanosine-containing mRNA cap during an early step in the initiation of protein synthesis and facilitates ribosome binding by inducing the unwinding of the mRNAs secondary structures. Key component of recessive resistance to potyviruses. In terms of biological role, (Microbial infection) Susceptibility host factor required for viral infection (e.g. potato virus Y (PVY) and pepper mottle virus (PepMoV)) by recruiting viral RNAs to the host ribosomal complex via an interaction with viral genome-linked protein (VPg). The chain is Eukaryotic translation initiation factor isoform 4E from Nicotiana tabacum (Common tobacco).